Here is a 383-residue protein sequence, read N- to C-terminus: S-adenosylmethionine synthase (383 aa).

Histidine 22 is a binding site for ATP. Residue aspartate 24 participates in Mg(2+) binding. Glutamate 50 serves as a coordination point for K(+). The L-methionine site is built by glutamate 63 and glutamine 99. Residues 99-109 (QSLEINQAVLK) form a flexible loop region. ATP-binding positions include 160-162 (DMK), aspartate 235, 241-242 (RK), serine 258, and lysine 262. Aspartate 235 contacts L-methionine. Residue lysine 266 participates in L-methionine binding.

This sequence belongs to the AdoMet synthase family. In terms of assembly, homotetramer; dimer of dimers. The cofactor is Mg(2+). K(+) is required as a cofactor.

The protein localises to the cytoplasm. It carries out the reaction L-methionine + ATP + H2O = S-adenosyl-L-methionine + phosphate + diphosphate. It functions in the pathway amino-acid biosynthesis; S-adenosyl-L-methionine biosynthesis; S-adenosyl-L-methionine from L-methionine: step 1/1. Catalyzes the formation of S-adenosylmethionine (AdoMet) from methionine and ATP. The overall synthetic reaction is composed of two sequential steps, AdoMet formation and the subsequent tripolyphosphate hydrolysis which occurs prior to release of AdoMet from the enzyme. The sequence is that of S-adenosylmethionine synthase from Mycoplasma genitalium (strain ATCC 33530 / DSM 19775 / NCTC 10195 / G37) (Mycoplasmoides genitalium).